The sequence spans 243 residues: Probable transcriptional regulator ycf27 (243 aa).

The Response regulatory domain maps to 7–120 (KILVVDDEAS…ELEARIRSVL (114 aa)). Asp56 is subject to 4-aspartylphosphate. The segment at residues 76-94 (DVPIIMLTALGEVCDRITG) is a DNA-binding region (H-T-H motif). The ompR/PhoB-type DNA-binding region spans 135–236 (SGIISIGFLK…ARGTGYLFQR (102 aa)).

The protein resides in the plastid. It is found in the chloroplast. Functionally, probable promoter-specific protein mediating the interaction between DNA and RNA polymerase. This Porphyra purpurea (Red seaweed) protein is Probable transcriptional regulator ycf27 (ycf27).